We begin with the raw amino-acid sequence, 441 residues long: uncharacterized protein (441 aa).

The next 11 helical transmembrane spans lie at 62-82 (FLSLGFFLVIIVLVGIAFEIG), 88-108 (LILTLALEVYFFSTALLKLFG), 112-132 (IALTLHFFEPLLVFILLIIAL), 154-174 (ALLHFTPLFNLLEGMASLLVV), 192-212 (WMFFILLNASSAISMSLYLLY), 224-244 (ALMIGFSLATVIVISIYGVAS), 247-267 (ANLSEASLMFLYIAYTVYMVC), 312-332 (IVLFMVAAAKTVAPSVFATFA), 335-355 (ISVMYAVTRILPAIQNNIIFL), 363-383 (QGMWSILSPCILIAVYTNLLL), and 399-419 (ILCSAEIWRWVSAILTLLLYA).

Its subcellular location is the membrane. This is an uncharacterized protein from Schizosaccharomyces pombe (strain 972 / ATCC 24843) (Fission yeast).